We begin with the raw amino-acid sequence, 363 residues long: Cinnamyl alcohol dehydrogenase 2 (363 aa).

Cysteine 47 provides a ligand contact to Zn(2+). Threonine 49 is a binding site for NADP(+). Zn(2+) contacts are provided by histidine 69, glutamate 70, cysteine 100, cysteine 103, cysteine 106, cysteine 114, and cysteine 163. NADP(+)-binding positions include threonine 167, 188-193 (GLGGVG), 211-216 (SSSARK), threonine 251, glycine 275, and 298-300 (SFI).

The protein belongs to the zinc-containing alcohol dehydrogenase family. As to quaternary structure, homodimer. Zn(2+) is required as a cofactor. In terms of tissue distribution, expressed in roots behind the root tips in the pericycle region and layer of cortical cells adjacent to the exodermis. Expressed in vascular bundles and lateral veins of leaf sheaths and blades. Expressed in the vicinity of vascular bundles in the first internode below the inflorescence. Highly expressed in the culm.

The enzyme catalyses (E)-cinnamyl alcohol + NADP(+) = (E)-cinnamaldehyde + NADPH + H(+). It carries out the reaction (E)-coniferol + NADP(+) = (E)-coniferaldehyde + NADPH + H(+). The catalysed reaction is (E)-sinapyl alcohol + NADP(+) = (E)-sinapaldehyde + NADPH + H(+). It catalyses the reaction (E)-4-coumaroyl alcohol + NADP(+) = (E)-4-coumaraldehyde + NADPH + H(+). The enzyme catalyses (E)-caffeyl alcohol + NADP(+) = (E)-caffeyl aldehyde + NADPH + H(+). It participates in aromatic compound metabolism; phenylpropanoid biosynthesis. In terms of biological role, involved in lignin biosynthesis. Catalyzes the final step specific for the production of lignin monomers. Catalyzes the NADPH-dependent reduction of coniferaldehyde and sinapaldehyde to their respective alcohols. Plays the major role in monolignol biosynthesis. Functions cooperatively with COMT in the culm internodes for the biosynthesis of monolignols, the lignin precursors. May be involved in lignin biosynthesis in leaves and roots. This chain is Cinnamyl alcohol dehydrogenase 2, found in Oryza sativa subsp. japonica (Rice).